Consider the following 893-residue polypeptide: Eukaryotic translation initiation factor 3 subunit A (893 aa).

One can recognise a PCI domain in the interval 319-502; it reads LQRMAAHVLL…NSIFFGTDLT (184 aa). Coiled coils occupy residues 576-707 and 784-881; these read QKII…RAKR and EIAL…REVA. Disordered regions lie at residues 592-634 and 837-893; these read AREL…EIQA and AEAR…RRRQ. Positions 837 to 881 are enriched in basic and acidic residues; that stretch reads AEARRLEREAEDEKRRQQYEKQRAKEEEAERKIQEDRDRLAREVA.

The protein belongs to the eIF-3 subunit A family. Component of the eukaryotic translation initiation factor 3 (eIF-3) complex. The eIF-3 complex interacts with pix.

It is found in the cytoplasm. In terms of biological role, RNA-binding component of the eukaryotic translation initiation factor 3 (eIF-3) complex, which is involved in protein synthesis of a specialized repertoire of mRNAs and, together with other initiation factors, stimulates binding of mRNA and methionyl-tRNAi to the 40S ribosome. The eIF-3 complex specifically targets and initiates translation of a subset of mRNAs involved in cell proliferation. In Drosophila grimshawi (Hawaiian fruit fly), this protein is Eukaryotic translation initiation factor 3 subunit A.